Here is a 578-residue protein sequence, read N- to C-terminus: Multidrug resistance-like ATP-binding protein MdlB (578 aa).

The ABC transmembrane type-1 domain maps to 25 to 308 (LILGFTLLLF…ITSQQSIFQQ (284 aa)). 6 helical membrane passes run 26-46 (ILGFTLLLFSSIFEVLNPILI), 59-79 (VNYSLKIITYYLILQILAAIL), 143-163 (SLFQNIILILITLITMFILEW), 166-186 (ACIASIIFPIALIIMLLYQYF), 196-216 (VYIANIYNIFNEIINGIDVIQ), and 260-280 (LILCGLILIFGIYPIGFFEIG). In terms of domain architecture, ABC transporter spans 339 to 573 (IKVKNLYFSY…KSYYKNMYYS (235 aa)). 373 to 380 (GRTGSGKS) serves as a coordination point for ATP.

The protein belongs to the ABC transporter superfamily. Drug exporter-2 (TC 3.A.1.117) family.

Its subcellular location is the cell membrane. The enzyme catalyses ATP + H2O + xenobioticSide 1 = ADP + phosphate + xenobioticSide 2.. This chain is Multidrug resistance-like ATP-binding protein MdlB (mdlB), found in Buchnera aphidicola subsp. Baizongia pistaciae (strain Bp).